The following is a 385-amino-acid chain: Glutamate 5-kinase (385 aa).

Lysine 17 serves as a coordination point for ATP. Substrate contacts are provided by serine 64, aspartate 151, and asparagine 165. An ATP-binding site is contributed by 185-186; sequence SD. The PUA domain occupies 291–367; the sequence is SGTVRVDAGA…NQIDNILGYN (77 aa).

The protein belongs to the glutamate 5-kinase family.

It is found in the cytoplasm. It carries out the reaction L-glutamate + ATP = L-glutamyl 5-phosphate + ADP. It participates in amino-acid biosynthesis; L-proline biosynthesis; L-glutamate 5-semialdehyde from L-glutamate: step 1/2. Its function is as follows. Catalyzes the transfer of a phosphate group to glutamate to form L-glutamate 5-phosphate. The sequence is that of Glutamate 5-kinase from Methanosarcina acetivorans (strain ATCC 35395 / DSM 2834 / JCM 12185 / C2A).